Consider the following 372-residue polypeptide: Chaperone protein DnaJ (372 aa).

The region spanning 5–69 (EFYDRLGVSK…QKRAAYDQYG (65 aa)) is the J domain. The CR-type zinc finger occupies 129–211 (GTEKEVKYHR…CHGTGHEKQA (83 aa)). 8 residues coordinate Zn(2+): Cys142, Cys145, Cys159, Cys162, Cys185, Cys188, Cys199, and Cys202. CXXCXGXG motif repeat units follow at residues 142 to 149 (CRTCNGSG), 159 to 166 (CGRCHGAG), 185 to 192 (CDVCHGRG), and 199 to 206 (CTTCHGTG).

Belongs to the DnaJ family. As to quaternary structure, homodimer. It depends on Zn(2+) as a cofactor.

The protein localises to the cytoplasm. Its function is as follows. Participates actively in the response to hyperosmotic and heat shock by preventing the aggregation of stress-denatured proteins and by disaggregating proteins, also in an autonomous, DnaK-independent fashion. Unfolded proteins bind initially to DnaJ; upon interaction with the DnaJ-bound protein, DnaK hydrolyzes its bound ATP, resulting in the formation of a stable complex. GrpE releases ADP from DnaK; ATP binding to DnaK triggers the release of the substrate protein, thus completing the reaction cycle. Several rounds of ATP-dependent interactions between DnaJ, DnaK and GrpE are required for fully efficient folding. Also involved, together with DnaK and GrpE, in the DNA replication of plasmids through activation of initiation proteins. This chain is Chaperone protein DnaJ, found in Streptococcus pneumoniae (strain ATCC BAA-255 / R6).